The sequence spans 286 residues: Transcription factor MafA (286 aa).

Phosphoserine is present on residues Ser14 and Ser49. Residues 51–85 are compositionally biased toward low complexity; sequence SSTPLSTPCSSVPSSPSFCAPSPGGQPSAGPTAAP. The segment at 51–87 is disordered; sequence SSTPLSTPCSSVPSSPSFCAPSPGGQPSAGPTAAPLG. 2 positions are modified to phosphothreonine: Thr53 and Thr57. 2 positions are modified to phosphoserine: Ser61 and Ser65. At Thr113 the chain carries Phosphothreonine. The interval 126–167 is disordered; it reads HHHHHHHQSYESFRPQPFGGEELPPAAHHHNAHHHHHHHHLR. Residues 152-166 show a composition bias toward basic residues; the sequence is AHHHNAHHHHHHHHL. The basic motif stretch occupies residues 199–224; it reads RLKQNRRTLKNRGYAQSCRYKRVQQR. Positions 199–262 constitute a bZIP domain; sequence RLKQNRRTLK…DLYKEKYEKL (64 aa). The tract at residues 227 to 248 is leucine-zipper; it reads LENEKCQLQSQVEQLKQEVSRL. Residues 265–286 are disordered; the sequence is RGFPREPSPPAAPKTTAADFFM. Position 272 is a phosphoserine (Ser272). The segment covering 277 to 286 has biased composition (low complexity); the sequence is PKTTAADFFM.

The protein belongs to the bZIP family. Maf subfamily. Forms homodimers or heterodimers. May interact (via leucine-zipper domain) with MAFB. May interact with FOS and JUN. Interacts with PCAF; this interaction impairs MAFA ubiquitination.

The protein resides in the nucleus. Functionally, transcription factor involved in transcription regulation during lens development, including that of crystallin and filensin/BFSP1 genes. Binds to CRE-type MARE 5'-TGCTGACGTCAGCA-3' and TRE-type MARE 5'-TGCTGACTCAGCA-3' DNA sequences. This Gallus gallus (Chicken) protein is Transcription factor MafA (MAFA).